A 247-amino-acid chain; its full sequence is Small ribosomal subunit protein uS3 (247 aa).

The KH type-2 domain occupies 38–106 (IRDFLSEGLD…QVQLNILEVK (69 aa)). Over residues 214–226 (SLMNARDERPSRG) the composition is skewed to basic and acidic residues. Residues 214 to 247 (SLMNARDERPSRGRRERPRRGGARRQRAEQKQEG) form a disordered region. A compositionally biased stretch (basic residues) spans 227 to 238 (RRERPRRGGARR).

Belongs to the universal ribosomal protein uS3 family. In terms of assembly, part of the 30S ribosomal subunit. Forms a tight complex with proteins S10 and S14.

Its function is as follows. Binds the lower part of the 30S subunit head. Binds mRNA in the 70S ribosome, positioning it for translation. This Corynebacterium jeikeium (strain K411) protein is Small ribosomal subunit protein uS3.